Reading from the N-terminus, the 511-residue chain is uncharacterized protein (511 aa).

One can recognise a CoA carboxyltransferase N-terminal domain in the interval 2–254 (LMDYEKERTE…NFQEKAPIHE (253 aa)). The carboxyltransferase stretch occupies residues 2-506 (LMDYEKERTE…KEMTFTNRKH (505 aa)). The region spanning 260–506 (HFETPLADVI…KEMTFTNRKH (247 aa)) is the CoA carboxyltransferase C-terminal domain.

It belongs to the AccD/PCCB family.

This is an uncharacterized protein from Bacillus subtilis (strain 168).